The chain runs to 920 residues: MNSMNPMKPALPPAPHGDGSFAYESVPWQQSATQPAGSLSVVTTVWGVGNATQSQVLGNPMGPAGSPSGSSMMPGVAGGSSALTSPQCLGQQAFAEGGANKGYVQQGVYSRGGYPGAPGFTTGYAGGPGGLGLPSHAARPSTDFTQAAAAAAVAAAAATATATATATVAALQEKQSQELSQYGAMGAGQSFNSQFLQHGGPRGPSVPAGMNPTGIGGVMGPSGLSPLAMNPTRAAGMTPLYAGQRLPQHGYPGPPQAQPLPRQGVKRTYSEVYPGQQYLQGGQYAPSTAQFAPSPGQPPAPSPSYPGHRLPLQQGMTQSLSVPGPTGLHYKPTEQFNGQGASFNGGSVSYSQPGLSGPTRSIPGYPSSPLPGNPTPPMTPSSSVPYMSPNQEVKSPFLPDLKPNLNSLHSSPSGSGPCDELRLTFPVRDGVVLEPFRLQHNLAVSNHVFQLRDSVYKTLIMRPDLELQFKCYHHEDRQMNTNWPASVQVSVNATPLTIERGDNKTSHKPLYLKHVCQPGRNTIQITVTACCCSHLFVLQLVHRPSVRSVLQGLLKKRLLPAEHCITKIKRNFSSGTIPGTPGPNGEDGVEQTAIKVSLKCPITFRRIQLPARGHDCRHIQCFDLESYLQLNCERGTWRCPVCNKTALLEGLEVDQYMLGILIYIQNSDYEEITIDPTCSWKPVPVKPDMHIKEEPDGPALKRCRTVSPAHVLMPSVMEMIAALGPGAAPFAPLQPPSVPAPSDYPGQGSSFLGPGTFPESFPPTTPSTPTLAEFTPGPPPISYQSDIPSSLLTSEKSTACLPSQMAPAGHLDPTHNPGTPGLHTSNLGAPPGPQLHHSNPPPASRQSLGQASLGPTGELAFSPATGVMGPPSMSGAGEAPEPALDLLPELTNPDELLSYLGPPDLPTNNNDDLLSLFENN.

Disordered regions lie at residues 1 to 22 (MNSM…GSFA) and 54 to 79 (SQVL…VAGG). The segment covering 60–79 (PMGPAGSPSGSSMMPGVAGG) has biased composition (low complexity). The residue at position 111 (R111) is an Omega-N-methylarginine. Disordered stretches follow at residues 243 to 265 (GQRL…RQGV) and 286 to 391 (PSTA…SPNQ). Asymmetric dimethylarginine is present on residues R245 and R262. A compositionally biased stretch (pro residues) spans 295–304 (PGQPPAPSPS). Positions 334–354 (EQFNGQGASFNGGSVSYSQPG) are enriched in polar residues. A compositionally biased stretch (pro residues) spans 366–379 (PSSPLPGNPTPPMT). The span at 380–389 (PSSSVPYMSP) shows a compositional bias: low complexity. Glycyl lysine isopeptide (Lys-Gly) (interchain with G-Cter in SUMO2) cross-links involve residues K402 and K457. Residues 435–506 (PFRLQHNLAV…TIERGDNKTS (72 aa)) are interaction with AR. The SP-RING-type zinc-finger motif lies at 585–671 (GEDGVEQTAI…IYIQNSDYEE (87 aa)). Residues C616, H618, C639, and C642 each contribute to the Zn(2+) site. K692 is covalently cross-linked (Glycyl lysine isopeptide (Lys-Gly) (interchain with G-Cter in SUMO2)). A disordered region spans residues 803-920 (SQMAPAGHLD…DDLLSLFENN (118 aa)). Residues 876–890 (AGEAPEPALDLLPEL) show a composition bias toward low complexity. Residues 906–920 (PTNNNDDLLSLFENN) show a composition bias toward polar residues.

In terms of assembly, interacts with AR, SMARCA4/BRG1 and SMARCE1/BAF57. Interaction with either SMARCA4 and SMARCE1 enhances AR-mediated transcription. In terms of tissue distribution, expressed most abundantly in testis with lower levels in heart, brain, pancreas, prostate and ovary.

It is found in the nucleus. In terms of biological role, increases ligand-dependent transcriptional activity of AR and other nuclear hormone receptors. This Homo sapiens (Human) protein is Zinc finger MIZ domain-containing protein 2 (ZMIZ2).